Reading from the N-terminus, the 213-residue chain is Receptor-binding cancer antigen expressed on SiSo cells (213 aa).

At 1 to 6 the chain is on the extracellular side; the sequence is MAITQF. The helical; Signal-anchor for type III membrane protein transmembrane segment at 7 to 27 threads the bilayer; sequence RLFKVCTCLATVFSFLKRLIC. The Cytoplasmic portion of the chain corresponds to 28–213; sequence RSGRGRKLSG…EQNKIGVKLS (186 aa). S36 carries the post-translational modification Phosphoserine. Phosphothreonine is present on T41. A Phosphotyrosine modification is found at Y94. A coiled-coil region spans residues 163–211; the sequence is EDAAWQAEEVLRQQKIADREKRAAEQQRKRMEKEAQRLMRKEQNKIGVK. Basic and acidic residues predominate over residues 179–206; that stretch reads ADREKRAAEQQRKRMEKEAQRLMRKEQN. Residues 179 to 213 form a disordered region; the sequence is ADREKRAAEQQRKRMEKEAQRLMRKEQNKIGVKLS.

As to quaternary structure, homodimer.

It is found in the golgi apparatus membrane. May participate in suppression of cell proliferation and induces apoptotic cell death through activation of interleukin-1-beta converting enzyme (ICE)-like proteases. The sequence is that of Receptor-binding cancer antigen expressed on SiSo cells (EBAG9) from Canis lupus familiaris (Dog).